Here is a 321-residue protein sequence, read N- to C-terminus: Triplex capsid protein 2 (321 aa).

It belongs to the herpesviridae TRX2 protein family. In terms of assembly, interacts with TRX1 and major capisd protein/MCP.

The protein resides in the virion. It is found in the host nucleus. Its function is as follows. Structural component of the T=16 icosahedral capsid. The capsid is composed of pentamers and hexamers of major capsid protein/MCP, which are linked together by heterotrimers called triplexes. These triplexes are formed by a single molecule of triplex protein 1/TRX1 and two copies of triplex protein 2/TRX2. Additionally, TRX1 is required for efficient transport of TRX2 to the nucleus, which is the site of capsid assembly. The polypeptide is Triplex capsid protein 2 (Amazona oratrix (yellow-headed parrot)).